Consider the following 160-residue polypeptide: Large ribosomal subunit protein uL16 (160 aa).

This sequence belongs to the universal ribosomal protein uL16 family. In terms of assembly, part of the 50S ribosomal subunit.

Its function is as follows. Binds 23S rRNA and is also seen to make contacts with the A and possibly P site tRNAs. In Prochlorococcus marinus (strain MIT 9301), this protein is Large ribosomal subunit protein uL16.